The sequence spans 38 residues: Large ribosomal subunit protein bL36 (38 aa).

This sequence belongs to the bacterial ribosomal protein bL36 family.

The sequence is that of Large ribosomal subunit protein bL36 from Bacteroides fragilis (strain ATCC 25285 / DSM 2151 / CCUG 4856 / JCM 11019 / LMG 10263 / NCTC 9343 / Onslow / VPI 2553 / EN-2).